We begin with the raw amino-acid sequence, 713 residues long: BBSome complex assembly protein BBS10 (713 aa).

Belongs to the TCP-1 chaperonin family. In terms of assembly, component of a complex composed at least of MKKS, BBS10, BBS12, TCP1, CCT2, CCT3, CCT4, CCT5 and CCT8.

It is found in the cell projection. The protein localises to the cilium. Functionally, probable molecular chaperone that assists the folding of proteins upon ATP hydrolysis. Plays a role in the assembly of BBSome, a complex involved in ciliogenesis regulating transports vesicles to the cilia. Involved in adipogenic differentiation. The protein is BBSome complex assembly protein BBS10 (Bbs10) of Mus musculus (Mouse).